The primary structure comprises 384 residues: S-adenosylmethionine synthase (384 aa).

His15 provides a ligand contact to ATP. Asp17 provides a ligand contact to Mg(2+). A K(+)-binding site is contributed by Glu43. The L-methionine site is built by Glu56 and Gln99. Positions 99 to 109 (QSPDINQGVDR) are flexible loop. ATP is bound by residues 164 to 166 (DAK), 231 to 232 (RF), Asp240, 246 to 247 (RK), Ala263, and Lys267. Position 240 (Asp240) interacts with L-methionine. Residue Lys271 participates in L-methionine binding.

It belongs to the AdoMet synthase family. As to quaternary structure, homotetramer; dimer of dimers. Mg(2+) is required as a cofactor. It depends on K(+) as a cofactor.

Its subcellular location is the cytoplasm. It carries out the reaction L-methionine + ATP + H2O = S-adenosyl-L-methionine + phosphate + diphosphate. The protein operates within amino-acid biosynthesis; S-adenosyl-L-methionine biosynthesis; S-adenosyl-L-methionine from L-methionine: step 1/1. In terms of biological role, catalyzes the formation of S-adenosylmethionine (AdoMet) from methionine and ATP. The overall synthetic reaction is composed of two sequential steps, AdoMet formation and the subsequent tripolyphosphate hydrolysis which occurs prior to release of AdoMet from the enzyme. The chain is S-adenosylmethionine synthase from Shewanella pealeana (strain ATCC 700345 / ANG-SQ1).